Reading from the N-terminus, the 210-residue chain is Somatotropin-2 (210 aa).

The first 22 residues, 1–22 (MARALVLLSVVLVSLLVNQGRA), serve as a signal peptide directing secretion. Residue histidine 38 coordinates Zn(2+). A disulfide bridge links cysteine 71 with cysteine 183. Glutamate 192 contacts Zn(2+). Cysteine 200 and cysteine 208 are disulfide-bonded.

Belongs to the somatotropin/prolactin family.

The protein resides in the secreted. Functionally, growth hormone plays an important role in growth control and is involved in the regulation of several anabolic processes. Implicated as an osmoregulatory substance important for seawater adaptation. The chain is Somatotropin-2 (gh2) from Carassius auratus (Goldfish).